We begin with the raw amino-acid sequence, 265 residues long: Indole-3-glycerol phosphate synthase (265 aa).

It belongs to the TrpC family.

The catalysed reaction is 1-(2-carboxyphenylamino)-1-deoxy-D-ribulose 5-phosphate + H(+) = (1S,2R)-1-C-(indol-3-yl)glycerol 3-phosphate + CO2 + H2O. It participates in amino-acid biosynthesis; L-tryptophan biosynthesis; L-tryptophan from chorismate: step 4/5. In Desulforamulus reducens (strain ATCC BAA-1160 / DSM 100696 / MI-1) (Desulfotomaculum reducens), this protein is Indole-3-glycerol phosphate synthase.